The sequence spans 555 residues: MRLLIPILIFALITTAVTWFYGRDDPDRWSVGGVWPLPKKIVYGSKNRTITYDKIGIDLGDKKDCDILLSMADNYMNKWLFPFPVEMKTGGTEDFIITVTVKDECPSGPPVHGASEEYLLRVSLTEAVINAQTVWGALRAMESLSHLVFYDHKSQEYQIRTVEIFDKPRFPVRGIMIDSSRHFLSVNVIKRQLEIMSMNKLNVLHWHLVDSESFPYTSVKFPELHGVGAYSPRHVYSREDIADVIAFARLRGIRVIPEFDLPGHTSSWRGRKGFLTECFDEKGVETFLPNLVDPMNEANFDFISEFLEEVTETFPDQFLHLGGDEVSDYIVECWERNKKIRKFMEEKGFGNDTVLLENYFFEKLYKIVENLKLKRKPIFWQEVFDNNIPDPNAVIHIWKGNTHEEIYEQVKNITSQNFPVIVSACWYLNYIKYGADWRDEIRGTAPSNSRYYYCDPTNFNGTVAQKELVWGGIAAIWGELVDNTNIEARLWPRASAAAERLWSPAEKTQRAEDAWPRMHELRCRLVSRGYRIQPNNNPDYCPFEFDEPPATKTEL.

The N-terminal stretch at 1–18 (MRLLIPILIFALITTAVT) is a signal peptide. Asn-47 carries an N-linked (GlcNAc...) asparagine glycan. Glu-325 (proton donor) is an active-site residue. 3 N-linked (GlcNAc...) asparagine glycosylation sites follow: Asn-351, Asn-412, and Asn-460.

Belongs to the glycosyl hydrolase 20 family. Expressed in coelomocytes and neurons of the pharyngeal region and nerve cord.

The protein localises to the lysosome. The enzyme catalyses Hydrolysis of terminal non-reducing N-acetyl-D-hexosamine residues in N-acetyl-beta-D-hexosaminides.. In terms of biological role, responsible for the degradation of GM2 gangliosides, and a variety of other molecules containing terminal N-acetyl hexosamines. Degrades chitotriose. The chain is Beta-hexosaminidase A (hex-1) from Caenorhabditis elegans.